The following is a 42-amino-acid chain: Photosystem I reaction center subunit IX (42 aa).

Residues 7–27 traverse the membrane as a helical segment; sequence YLSTAPVLATLWFGFLAGLLI.

The protein belongs to the PsaJ family.

The protein localises to the plastid. It is found in the chloroplast thylakoid membrane. In terms of biological role, may help in the organization of the PsaE and PsaF subunits. In Anthoceros angustus (Hornwort), this protein is Photosystem I reaction center subunit IX.